Here is a 299-residue protein sequence, read N- to C-terminus: MNKDNVKLAIAPIGWTNDDMPELGSENTFQQIVSEMALAGFTGSEVGSKYPRDPAVLKPMLDIRGIQICNAWFSTFFANGQREKTIDEFVNHMNFLHAMGAKVIGCSEQSGSIQGLDKPILGDAKPCFSDEEWQRVAEGYNTLGRLAAEKGMQVCLHHHMGTGIQTTAEIDKFMSLVDERVFLLFDTGHAWYSEGGEAPMLAILKKYLPRINHVHLKDVRPPVIDQVRRDGLSFLDGVKKGTFTVPGDGVIDFRPVFKLLDDFGYKGWMVVEAEQDPALANPFEYAVKARKYIRETAGI.

It belongs to the IolE/MocC family. It depends on glutathione as a cofactor. The cofactor is Co(2+). Mn(2+) is required as a cofactor.

It catalyses the reaction scyllo-inosose = 3D-3,5/4-trihydroxycyclohexane-1,2-dione + H2O. Its function is as follows. Catalyzes the dehydration of inosose (2-keto-myo-inositol, 2KMI or 2,4,6/3,5-pentahydroxycyclohexanone) to 3D-(3,5/4)-trihydroxycyclohexane-1,2-dione (D-2,3-diketo-4-deoxy-epi-inositol). This Klebsiella pneumoniae subsp. pneumoniae (strain ATCC 700721 / MGH 78578) protein is Inosose dehydratase.